We begin with the raw amino-acid sequence, 475 residues long: MRRERDATQIPENPMEGIPQTAAAAAAAAAAEASEPPRKRARVDGGGGGAGEEEEDRLSDLPDCLLEDILAHLGSRQAVQTSVLSRRWRNLWRGVRVVVIDVGSFRLPGADGDPPRFRLDRIEDFADGVLSPSLHPGAARELDALRMRLDEDAVTTNFQRWIRRALWRRPATVDLYYLPRRSFSWPPAVPLTPVTAVSRLKTLRIFGLRPTVVFGADEFPALEDLHIERCSYAHGTIASPTLKRLALVSPINGCFVREQRLTAPGLTSLRLVLPYSREEGVRVITDAPLTSLVDASITIVDTDPGDPRNRRVNQFKVDFLVAISNLLGRLTSVRNLDLTGLNATALLDNKSQEFPMFPYLTTLLLNECDIGYKYHVLRSILQNAPNLEQLRLHNCKFVGKSRRKAGQTQSKEKTSKCSSSTLSSACSSLKSVEIKHPRGEPSHDLLHEFLKEIPHNQWRKRSIDEETISIELNRK.

The disordered stretch occupies residues 1 to 58; it reads MRRERDATQIPENPMEGIPQTAAAAAAAAAAEASEPPRKRARVDGGGGGAGEEEEDRL. Positions 22–33 are enriched in low complexity; that stretch reads AAAAAAAAAAEA. Residues 55-91 form the F-box domain; sequence EDRLSDLPDCLLEDILAHLGSRQAVQTSVLSRRWRNL.

Belongs to the F-box protein family. FBX subfamily. As to quaternary structure, part of a SCF (SKP1-CUL1-F-box protein) E3 ubiquitin-protein ligase complex. Interacts (via F-box domain) directly with SKP1. As to expression, highly expressed in the stem, leaf and in the anther during meiosis. Weakly expressed in roots and lemma/palea.

The protein resides in the nucleus. It localises to the chromosome. The protein operates within protein modification; protein ubiquitination. In terms of biological role, probable component of a SCF (SKP1-CULLIN-F-box protein) E3 ubiquitin-protein ligase complex and may function through the ubiquitin-mediated protein degradation or signaling pathway. Required for male meiotic prophase I progression. Required for telomere bouquet formation, homologous chromosome pairing and for the formation of the synaptonemal complex (SC), which stabilizes initial chromosomal axial associations and promotes crossover formation. Involved in meiotic DNA double-strand break (DSB) end-processing and repair, and is important in the recruitment of DSB repair proteins to the DSB sites. The chain is MEIOTIC F-BOX protein MOF from Oryza sativa subsp. japonica (Rice).